The sequence spans 445 residues: 3-phosphoshikimate 1-carboxyvinyltransferase (445 aa).

Lys21, Ser22, and Arg26 together coordinate 3-phosphoshikimate. Residue Lys21 participates in phosphoenolpyruvate binding. Residues Gly92 and Arg120 each coordinate phosphoenolpyruvate. Residues Ser165, Gln166, Asp307, and Lys334 each contribute to the 3-phosphoshikimate site. Gln166 lines the phosphoenolpyruvate pocket. The Proton acceptor role is filled by Asp307. Residues Arg338, Arg379, and Lys405 each coordinate phosphoenolpyruvate.

It belongs to the EPSP synthase family. As to quaternary structure, monomer.

The protein localises to the cytoplasm. The enzyme catalyses 3-phosphoshikimate + phosphoenolpyruvate = 5-O-(1-carboxyvinyl)-3-phosphoshikimate + phosphate. Its pathway is metabolic intermediate biosynthesis; chorismate biosynthesis; chorismate from D-erythrose 4-phosphate and phosphoenolpyruvate: step 6/7. Its function is as follows. Catalyzes the transfer of the enolpyruvyl moiety of phosphoenolpyruvate (PEP) to the 5-hydroxyl of shikimate-3-phosphate (S3P) to produce enolpyruvyl shikimate-3-phosphate and inorganic phosphate. The sequence is that of 3-phosphoshikimate 1-carboxyvinyltransferase from Chlamydia pneumoniae (Chlamydophila pneumoniae).